The sequence spans 479 residues: Bifunctional protein HldE (479 aa).

Residues 1–322 (MIDDFRFGRI…RELLQEMPET (322 aa)) are ribokinase. Residue 198-201 (NRIE) participates in ATP binding. D267 is a catalytic residue. A cytidylyltransferase region spans residues 347–479 (FTNGCFDLVH…LVRGMQSAPS (133 aa)).

The protein in the N-terminal section; belongs to the carbohydrate kinase PfkB family. This sequence in the C-terminal section; belongs to the cytidylyltransferase family. Homodimer.

The catalysed reaction is D-glycero-beta-D-manno-heptose 7-phosphate + ATP = D-glycero-beta-D-manno-heptose 1,7-bisphosphate + ADP + H(+). It catalyses the reaction D-glycero-beta-D-manno-heptose 1-phosphate + ATP + H(+) = ADP-D-glycero-beta-D-manno-heptose + diphosphate. Its pathway is nucleotide-sugar biosynthesis; ADP-L-glycero-beta-D-manno-heptose biosynthesis; ADP-L-glycero-beta-D-manno-heptose from D-glycero-beta-D-manno-heptose 7-phosphate: step 1/4. It participates in nucleotide-sugar biosynthesis; ADP-L-glycero-beta-D-manno-heptose biosynthesis; ADP-L-glycero-beta-D-manno-heptose from D-glycero-beta-D-manno-heptose 7-phosphate: step 3/4. Functionally, catalyzes the phosphorylation of D-glycero-D-manno-heptose 7-phosphate at the C-1 position to selectively form D-glycero-beta-D-manno-heptose-1,7-bisphosphate. Catalyzes the ADP transfer from ATP to D-glycero-beta-D-manno-heptose 1-phosphate, yielding ADP-D-glycero-beta-D-manno-heptose. In Gluconobacter oxydans (strain 621H) (Gluconobacter suboxydans), this protein is Bifunctional protein HldE.